Reading from the N-terminus, the 150-residue chain is Protein-export protein SecB (150 aa).

This sequence belongs to the SecB family. Homotetramer, a dimer of dimers. One homotetramer interacts with 1 SecA dimer.

The protein resides in the cytoplasm. In terms of biological role, one of the proteins required for the normal export of preproteins out of the cell cytoplasm. It is a molecular chaperone that binds to a subset of precursor proteins, maintaining them in a translocation-competent state. It also specifically binds to its receptor SecA. This chain is Protein-export protein SecB, found in Psychrobacter cryohalolentis (strain ATCC BAA-1226 / DSM 17306 / VKM B-2378 / K5).